Here is a 274-residue protein sequence, read N- to C-terminus: 3-methyl-2-oxobutanoate hydroxymethyltransferase (274 aa).

The Mg(2+) site is built by D49 and D88. 3-methyl-2-oxobutanoate contacts are provided by residues 49-50 (DS), D88, and K118. E120 provides a ligand contact to Mg(2+). The active-site Proton acceptor is the E187.

Belongs to the PanB family. Homodecamer; pentamer of dimers. Requires Mg(2+) as cofactor.

It localises to the cytoplasm. The catalysed reaction is 3-methyl-2-oxobutanoate + (6R)-5,10-methylene-5,6,7,8-tetrahydrofolate + H2O = 2-dehydropantoate + (6S)-5,6,7,8-tetrahydrofolate. The protein operates within cofactor biosynthesis; (R)-pantothenate biosynthesis; (R)-pantoate from 3-methyl-2-oxobutanoate: step 1/2. Its function is as follows. Catalyzes the reversible reaction in which hydroxymethyl group from 5,10-methylenetetrahydrofolate is transferred onto alpha-ketoisovalerate to form ketopantoate. This chain is 3-methyl-2-oxobutanoate hydroxymethyltransferase, found in Paramagnetospirillum magneticum (strain ATCC 700264 / AMB-1) (Magnetospirillum magneticum).